The following is a 1189-amino-acid chain: Disabled homolog 2-interacting protein (1189 aa).

Residues 1–75 (MSAGGNARKS…EPSASTPFRV (75 aa)) form a disordered region. Residues 20–38 (LLRRPRLQRQRSRSRSRTR) show a composition bias toward basic residues. Positions 39–49 (PARESPQERPG) are enriched in basic and acidic residues. Residues 59–73 (SEKNPSMEPSASTPF) are compositionally biased toward polar residues. In terms of domain architecture, PH spans 101-202 (SFRHILPGFR…WMENLRRAVH (102 aa)). The 119-residue stretch at 193-311 (WMENLRRAVH…AGRQFVEKWY (119 aa)) folds into the C2 domain. Residues 387–595 (GKVKDFLTDL…TNMQRFLLEI (209 aa)) form the Ras-GAP domain. A necessary for interaction with AKT1 region spans residues 646–943 (LRDVHTALST…RTPPTLLSTL (298 aa)). Residues 653–668 (LSTPGSGQLPGTNDLA) show a composition bias toward polar residues. Disordered regions lie at residues 653–679 (LSTP…SSVS) and 715–738 (RSSG…PDLQ). The span at 669 to 679 (STPGSGSSSVS) shows a compositional bias: low complexity. The segment covering 715 to 731 (RSSGVQPSPARSSSYSE) has biased composition (polar residues). Phosphoserine; by MAP3K5 and RIPK1 is present on Ser-728. Ser-747 bears the Phosphoserine mark. Disordered regions lie at residues 804-823 (VPTP…PQLL), 843-865 (PRGL…NSEE), 895-998 (SLTE…SPNA), 1015-1034 (EDEG…SKEE), and 1163-1189 (ARNG…SSNC). Residues 852–865 (EGHSSLSSHSNSEE) show a composition bias toward low complexity. Positions 919–931 (QPPPPPPPPPPAP) are enriched in pro residues. Polar residues-rich tracts occupy residues 939 to 955 (LLST…TLAS) and 967 to 976 (LRQQSSSSKG). 2 positions are modified to phosphoserine: Ser-978 and Ser-995. The span at 1023 to 1034 (PPHRDRLRSKEE) shows a compositional bias: basic and acidic residues. A coiled-coil region spans residues 1025 to 1159 (HRDRLRSKEE…SALTQLKERY (135 aa)).

As to quaternary structure, on plasma membrane, exists in an inactive form complexed with TNFR1; in response to TNF-alpha, dissociates from TNFR1 complex, translocates to cytoplasm and forms part of an intracellular signaling complex comprising TRADD, RIPK1, TRAF2 and MAP3K5. Interacts with DAB1. Part of a cytoplasmic complex made of HIPK1, DAB2IP and MAP3K5 in response to TNF-alpha; this complex formation promotes MAP3K5-JNK activation and subsequent apoptosis. Interacts (via N-terminal domain) with JAK2; the interaction occurs in a IFNG/IFN-gamma-dependent manner and inhibits JAK2 autophosphorylation activity. Interacts (via C2 domain) with GSK3B; the interaction stimulates GSK3B kinase activation. Interacts (via C2 domain) with PPP2CA. Interacts (via proline-rich motif) with a regulatory p85 subunit (via SH3 domain) of the PI3K complex; the interaction inhibits the PI3K-AKT complex activity in a TNF-alpha-dependent manner in prostate cancer (PCa) cells. Interacts with AKT1; the interaction is increased in a TNF-alpha-induced manner. Interacts (via C2 domain and active form preferentially) with KDR/VEGFR2 (tyrosine-phosphorylated active form preferentially); the interaction occurs at the late phase of VEGFA response and inhibits KDR/VEGFR2 activity. Interacts (via N-terminus C2 domain) with MAP3K5 ('Ser-966' dephosphorylated form preferentially); the interaction occurs in a TNF-alpha-induced manner. Interacts (via Ras-GAP domain) with the catalytic subunit of protein phosphatase PP2A; the interaction occurs in resting endothelial cells, is further enhanced by TNF-alpha stimulation and is required to bridge PP2A to MAP3K5. Interacts (via C-terminus PER domain) with TRAF2 (via zinc fingers); the interaction occurs in a TNF-alpha-dependent manner. Interacts with 14-3-3 proteins; the interaction occurs in a TNF-alpha-dependent manner. Interacts (via Ras-GAP domain) with RIPK1 (via kinase domain); the interaction occurs in a TNF-alpha-dependent manner. Interacts (via PH domain) with ERN1. Interacts with TRAF2. Interacts (via NPXY motif) with DAB2 (via PID domain). Interacts with RAB40C; acts as a GAP for RAB40C. In terms of processing, in response to TNF-alpha-induction, phosphorylated at Ser-728; phosphorylation leads to a conformational change, and thus, increases its association with 14-3-3 proteins, MAP3K5, RIPK1 and TRAF2 in endothelial cells; also stimulates regulatory p85 subunit sequestring and PI3K-p85 complex activity inhibition. Expressed in vascular endothelium of muscle and aorta, in smooth muscle cells of aorta and epithelial cells of lung. Expressed throughout the brain, including olfactory bulb, hypothalamus, cerebellum and cerebral cortex. Expressed in the soma and processes of neurons in a variety of brain structures, including the developing cerebral cortex, CA1 pyramidal neurons and Purkinje cells. Poorly expressed in medulloblastoma cells compared to cerebellar precursor proliferating progenitor cells (at protein level). Highly expressed in the brain, salivary gland, and testis; moderate expression in kidney and heart. Low expression in the lung, seminal vesicle, ventral prostate, epididymis, liver, and bladder. Very low expression in the coagulation gland and skeleton muscles. Lowest expression seen in spleen.

The protein localises to the cytoplasm. The protein resides in the cell membrane. It is found in the membrane. Its subcellular location is the cell projection. It localises to the dendrite. Functionally, functions as a scaffold protein implicated in the regulation of a large spectrum of both general and specialized signaling pathways. Involved in several processes such as innate immune response, inflammation and cell growth inhibition, apoptosis, cell survival, angiogenesis, cell migration and maturation. Also plays a role in cell cycle checkpoint control; reduces G1 phase cyclin levels resulting in G0/G1 cell cycle arrest. Mediates signal transduction by receptor-mediated inflammatory signals, such as the tumor necrosis factor (TNF), interferon (IFN) or lipopolysaccharide (LPS). Modulates the balance between phosphatidylinositol 3-kinase (PI3K)-AKT-mediated cell survival and apoptosis stimulated kinase (MAP3K5)-JNK signaling pathways; sequesters both AKT1 and MAP3K5 and counterbalances the activity of each kinase by modulating their phosphorylation status in response to pro-inflammatory stimuli. Acts as a regulator of the endoplasmic reticulum (ER) unfolded protein response (UPR) pathway; specifically involved in transduction of the ER stress-response to the JNK cascade through ERN1. Mediates TNF-alpha-induced apoptosis activation by facilitating dissociation of inhibitor 14-3-3 from MAP3K5; recruits the PP2A phosphatase complex which dephosphorylates MAP3K5 on 'Ser-966', leading to the dissociation of 13-3-3 proteins and activation of the MAP3K5-JNK signaling pathway in endothelial cells. Also mediates TNF/TRAF2-induced MAP3K5-JNK activation, while it inhibits CHUK-NF-kappa-B signaling. Acts a negative regulator in the IFN-gamma-mediated JAK-STAT signaling cascade by inhibiting smooth muscle cell (VSMCs) proliferation and intimal expansion, and thus, prevents graft arteriosclerosis (GA). Acts as a GTPase-activating protein (GAP) for the ADP ribosylation factor 6 (ARF6) and Ras. Promotes hydrolysis of the ARF6-bound GTP and thus, negatively regulates phosphatidylinositol 4,5-bisphosphate (PIP2)-dependent TLR4-TIRAP-MyD88 and NF-kappa-B signaling pathways in endothelial cells in response to lipopolysaccharides (LPS). Binds specifically to phosphatidylinositol 4-phosphate (PtdIns4P) and phosphatidylinositol 3-phosphate (PtdIns3P). In response to vascular endothelial growth factor (VEGFA), acts as a negative regulator of the VEGFR2-PI3K-mediated angiogenic signaling pathway by inhibiting endothelial cell migration and tube formation. In the developing brain, promotes both the transition from the multipolar to the bipolar stage and the radial migration of cortical neurons from the ventricular zone toward the superficial layer of the neocortex in a glial-dependent locomotion process. Probable downstream effector of the Reelin signaling pathway; promotes Purkinje cell (PC) dendrites development and formation of cerebellar synapses. Also functions as a tumor suppressor protein in prostate cancer progression; prevents cell proliferation and epithelial-to-mesenchymal transition (EMT) through activation of the glycogen synthase kinase-3 beta (GSK3B)-induced beta-catenin and inhibition of PI3K-AKT and Ras-MAPK survival downstream signaling cascades, respectively. The sequence is that of Disabled homolog 2-interacting protein (Dab2ip) from Mus musculus (Mouse).